The following is a 345-amino-acid chain: Uroporphyrinogen decarboxylase (345 aa).

Substrate contacts are provided by residues 27–31 (RQAGR), F46, D76, Y152, S207, and H320.

It belongs to the uroporphyrinogen decarboxylase family. Homodimer.

It localises to the cytoplasm. It carries out the reaction uroporphyrinogen III + 4 H(+) = coproporphyrinogen III + 4 CO2. It functions in the pathway porphyrin-containing compound metabolism; protoporphyrin-IX biosynthesis; coproporphyrinogen-III from 5-aminolevulinate: step 4/4. Its function is as follows. Catalyzes the decarboxylation of four acetate groups of uroporphyrinogen-III to yield coproporphyrinogen-III. This chain is Uroporphyrinogen decarboxylase, found in Geobacillus kaustophilus (strain HTA426).